The chain runs to 163 residues: SKP1-like protein 4 (163 aa).

The interval 105–163 (ILAANYLNIGGLLDLTCKAVADQMRGKTPEQMRAHFNIKNDYTPEEEAEVRNENKWAFE) is interaction with the F-box domain of F-box proteins.

It belongs to the SKP1 family. Part of a SCF (SKP1-cullin-F-box) protein ligase complex. Interacts with At1g56610, At1g67340, At3g62230, At3g59000, At4g27050, At1g55000, SKIP16 and SKIP32. As to expression, mostly expressed in inflorescence and siliques, and, to a lower extent, in seedlings, roots, and stems.

The protein resides in the nucleus. It functions in the pathway protein modification; protein ubiquitination. Its function is as follows. Involved in ubiquitination and subsequent proteasomal degradation of target proteins. Together with CUL1, RBX1 and a F-box protein, it forms a SCF E3 ubiquitin ligase complex. The functional specificity of this complex depends on the type of F-box protein. In the SCF complex, it serves as an adapter that links the F-box protein to CUL1. The chain is SKP1-like protein 4 (ASK4) from Arabidopsis thaliana (Mouse-ear cress).